The sequence spans 235 residues: Small ribosomal subunit protein uS2c (235 aa).

Belongs to the universal ribosomal protein uS2 family.

It localises to the plastid. The protein resides in the chloroplast. This chain is Small ribosomal subunit protein uS2c (rps2), found in Cryptomeria japonica (Japanese cedar).